Here is a 494-residue protein sequence, read N- to C-terminus: Glycerol kinase (494 aa).

An ADP-binding site is contributed by Thr-12. Thr-12, Thr-13, and Ser-14 together coordinate ATP. Thr-12 provides a ligand contact to sn-glycerol 3-phosphate. Arg-16 contributes to the ADP binding site. Residues Arg-82, Glu-83, Tyr-134, and Asp-243 each contribute to the sn-glycerol 3-phosphate site. Residues Arg-82, Glu-83, Tyr-134, Asp-243, and Gln-244 each contribute to the glycerol site. 2 residues coordinate ADP: Thr-265 and Gly-308. The ATP site is built by Thr-265, Gly-308, Gln-312, and Gly-408. ADP is bound by residues Gly-408 and Asn-412.

The protein belongs to the FGGY kinase family.

It catalyses the reaction glycerol + ATP = sn-glycerol 3-phosphate + ADP + H(+). It participates in polyol metabolism; glycerol degradation via glycerol kinase pathway; sn-glycerol 3-phosphate from glycerol: step 1/1. Inhibited by fructose 1,6-bisphosphate (FBP). Functionally, key enzyme in the regulation of glycerol uptake and metabolism. Catalyzes the phosphorylation of glycerol to yield sn-glycerol 3-phosphate. The chain is Glycerol kinase from Marinomonas sp. (strain MWYL1).